The chain runs to 589 residues: Probable translation initiation factor IF-2 (589 aa).

The tr-type G domain occupies 5–219 (IRTPIVCVLG…IMIGLAQRYL (215 aa)). A G1 region spans residues 14-21 (GHVDHGKT). GTP is bound at residue 14–21 (GHVDHGKT). Residues 39–43 (AITQH) form a G2 region. The G3 stretch occupies residues 75–78 (DTPG). Residues 75–79 (DTPGH) and 129–132 (TKLD) contribute to the GTP site. A G4 region spans residues 129–132 (TKLD). The G5 stretch occupies residues 197-199 (SSM).

Belongs to the TRAFAC class translation factor GTPase superfamily. Classic translation factor GTPase family. IF-2 subfamily.

Functionally, function in general translation initiation by promoting the binding of the formylmethionine-tRNA to ribosomes. Seems to function along with eIF-2. The sequence is that of Probable translation initiation factor IF-2 from Methanocorpusculum labreanum (strain ATCC 43576 / DSM 4855 / Z).